The following is a 215-amino-acid chain: Nucleoside triphosphate pyrophosphatase (215 aa).

Catalysis depends on Asp80, which acts as the Proton acceptor.

Belongs to the Maf family. A divalent metal cation serves as cofactor.

The protein resides in the cytoplasm. It catalyses the reaction a ribonucleoside 5'-triphosphate + H2O = a ribonucleoside 5'-phosphate + diphosphate + H(+). The catalysed reaction is a 2'-deoxyribonucleoside 5'-triphosphate + H2O = a 2'-deoxyribonucleoside 5'-phosphate + diphosphate + H(+). In terms of biological role, nucleoside triphosphate pyrophosphatase. May have a dual role in cell division arrest and in preventing the incorporation of modified nucleotides into cellular nucleic acids. This Leifsonia xyli subsp. xyli (strain CTCB07) protein is Nucleoside triphosphate pyrophosphatase.